A 420-amino-acid chain; its full sequence is E3 ubiquitin protein ligase DRIP2 (420 aa).

The RING-type zinc-finger motif lies at 20–61; the sequence is CPLCDKLLRDATTISECLHTFCRKCIYEKITEDEIESCPVCD. Over residues 113–123 the composition is skewed to polar residues; the sequence is ISSLVVSTPRV. Disordered stretches follow at residues 113 to 201 and 226 to 289; these read ISSL…KDVD and DPKS…TFGD. Positions 154–165 are enriched in basic and acidic residues; it reads KKEEEFGDDHVE. 2 stretches are compositionally biased toward polar residues: residues 166 to 194 and 232 to 242; these read SASS…SLSN and GNASHNDVQGS. The span at 244 to 253 shows a compositional bias: basic residues; sequence TKTKDHKRKC. Over residues 260–273 the composition is skewed to polar residues; it reads SNNGDPTTSETATL. Basic residues predominate over residues 274–284; the sequence is KRTRRTRRKRS.

In terms of assembly, interacts with DREB2A. Auto-ubiquitinated. In terms of tissue distribution, expressed in roots, leaves and flowers.

The catalysed reaction is S-ubiquitinyl-[E2 ubiquitin-conjugating enzyme]-L-cysteine + [acceptor protein]-L-lysine = [E2 ubiquitin-conjugating enzyme]-L-cysteine + N(6)-ubiquitinyl-[acceptor protein]-L-lysine.. It functions in the pathway protein modification; protein ubiquitination. Functionally, E3 ubiquitin-protein ligase that acts as a negative regulator of the response to water stress. Mediates ubiquitination and subsequent proteasomal degradation of the drought-induced transcriptional activator DREB2A. Functionally redundant with DRIP1. This chain is E3 ubiquitin protein ligase DRIP2 (DRIP2), found in Arabidopsis thaliana (Mouse-ear cress).